The chain runs to 313 residues: MSKRTLRIATRSSALALWQAEFIKAELERLHDNVDVELIKIKTQGDKILDVPLAKIGGKGLFVKELEEAMLDGRADLAVHSMKDVPMEFPEGLGLVAICEREDPTDAFVSNQYEHIDQLPEGAVVGTASLRREAQLRANRPDLQIKVLRGNVNTRLAKLDAGEYDAIVLASSGLKRLGFHDRIRYCLPDTFSLPAVGQGALGIECRVGDTELLELIDPLNHTDTWDRVSAERALNRRLEGGCQVPIAAYALLEDDNTLWLRGLVGAVDGTQIFRVEGRAPRAEGERLGRELAEQLLSMGADKVLAEIYGHTPR.

Residue C242 is modified to S-(dipyrrolylmethanemethyl)cysteine.

The protein belongs to the HMBS family. In terms of assembly, monomer. Dipyrromethane serves as cofactor.

It catalyses the reaction 4 porphobilinogen + H2O = hydroxymethylbilane + 4 NH4(+). It functions in the pathway porphyrin-containing compound metabolism; protoporphyrin-IX biosynthesis; coproporphyrinogen-III from 5-aminolevulinate: step 2/4. Functionally, tetrapolymerization of the monopyrrole PBG into the hydroxymethylbilane pre-uroporphyrinogen in several discrete steps. This Marinobacter nauticus (strain ATCC 700491 / DSM 11845 / VT8) (Marinobacter aquaeolei) protein is Porphobilinogen deaminase.